Here is a 130-residue protein sequence, read N- to C-terminus: Albumin-1 A (130 aa).

The signal sequence occupies residues 1–26 (MASVKLASLIVLFATLGMFLTKNVGA). 3 disulfide bridges follow: Cys29–Cys46, Cys33–Cys48, and Cys41–Cys58. Propeptides lie at residues 64 to 69 (VFLRTN) and 123 to 130 (LLKSVSTA).

The C-terminal glycine may be removed from PA1b. In terms of tissue distribution, major component of both the cotyledons and embryonic axes of mature seeds.

PA1b binds to basic 7S globulin (BG) and stimulates its phosphorylation activity. Involved in the signal transduction system to regulate the growth and differentiation as a hormone peptide. Toxic to various insects through binding to a high affinity binding site in the insect gut. The chain is Albumin-1 A from Pisum sativum (Garden pea).